The chain runs to 84 residues: Putative defensin-like protein 139 (84 aa).

An N-terminal signal peptide occupies residues 1–28 (MEPSNQIFFYLRRSKLLSGLGEIRMAKG). 4 disulfides stabilise this stretch: Cys-37–Cys-81, Cys-46–Cys-65, Cys-51–Cys-75, and Cys-55–Cys-77.

This sequence belongs to the DEFL family.

The protein resides in the secreted. This is Putative defensin-like protein 139 (LCR7) from Arabidopsis thaliana (Mouse-ear cress).